A 255-amino-acid chain; its full sequence is MKNQIVYEFPLNERMRLFMRLEQLFRQARHFNQGGSVWDCRAVVATLNEIVALLARNDIKSELLKELDRLGGGLGKMQGNQHIDQAALATVLGQIDAAAQRIYGHSGRIGYQVMENELFKSVAQRTAIPGGTCSFDLPGYHFWLERDVERRRNEATEWLDCFHPVQEGIALILGLLRDSAAGIWETAHGGFFQKNLDHAAAVQLLRVAVPIELPYFAEISGSKHRFTVRFLTGLSNERPVQCSEDVPFQLTVCLL.

It belongs to the ZapD family. Interacts with FtsZ.

The protein localises to the cytoplasm. Functionally, cell division factor that enhances FtsZ-ring assembly. Directly interacts with FtsZ and promotes bundling of FtsZ protofilaments, with a reduction in FtsZ GTPase activity. The polypeptide is Cell division protein ZapD (Methylococcus capsulatus (strain ATCC 33009 / NCIMB 11132 / Bath)).